The primary structure comprises 562 residues: NAD-dependent malic enzyme (562 aa).

The Proton donor role is filled by tyrosine 101. Position 154 (arginine 154) interacts with NAD(+). Lysine 172 functions as the Proton acceptor in the catalytic mechanism. The a divalent metal cation site is built by glutamate 243, aspartate 244, and aspartate 267. NAD(+) contacts are provided by aspartate 267 and asparagine 415.

It belongs to the malic enzymes family. Homotetramer. Mg(2+) is required as a cofactor. It depends on Mn(2+) as a cofactor.

The enzyme catalyses (S)-malate + NAD(+) = pyruvate + CO2 + NADH. It catalyses the reaction oxaloacetate + H(+) = pyruvate + CO2. In Aliivibrio salmonicida (strain LFI1238) (Vibrio salmonicida (strain LFI1238)), this protein is NAD-dependent malic enzyme.